Here is a 476-residue protein sequence, read N- to C-terminus: Serine/threonine-protein kinase PknF (476 aa).

A phosphothreonine; by autocatalysis mark is found at T8 and T13. The region spanning 12–279 (FTIVRQLGSG…FARALGHRLG (268 aa)) is the Protein kinase domain. Residues 18-26 (LGSGGMGEV) and K41 contribute to the ATP site. The Proton acceptor role is filled by D137. A phosphothreonine; by autocatalysis mark is found at T173, T175, and T287. At S290 the chain carries Phosphoserine; by autocatalysis. Residues 332–376 (ADDERAAQPARTRTTTSAGTTTSVAPASTTRPAPTTPTTTGAADT) are disordered. Residues 338 to 376 (AQPARTRTTTSAGTTTSVAPASTTRPAPTTPTTTGAADT) show a composition bias toward low complexity.

This sequence belongs to the protein kinase superfamily. Ser/Thr protein kinase family. Dephosphorylated by PstP.

It catalyses the reaction L-seryl-[protein] + ATP = O-phospho-L-seryl-[protein] + ADP + H(+). It carries out the reaction L-threonyl-[protein] + ATP = O-phospho-L-threonyl-[protein] + ADP + H(+). The chain is Serine/threonine-protein kinase PknF (pknF) from Mycobacterium bovis (strain ATCC BAA-935 / AF2122/97).